The following is a 305-amino-acid chain: Small ribosomal subunit protein bS1B (305 aa).

3 S1 motif domains span residues 29-98 (GQTV…LSRR), 116-180 (GKTL…LTQR), and 194-262 (GNIY…LSTR).

Belongs to the bacterial ribosomal protein bS1 family.

Binds mRNA. In Synechocystis sp. (strain ATCC 27184 / PCC 6803 / Kazusa), this protein is Small ribosomal subunit protein bS1B (rps1b).